Here is a 509-residue protein sequence, read N- to C-terminus: Lysine--tRNA ligase (509 aa).

Mg(2+) contacts are provided by Glu419 and Glu426.

It belongs to the class-II aminoacyl-tRNA synthetase family. Homodimer. Requires Mg(2+) as cofactor.

Its subcellular location is the cytoplasm. The enzyme catalyses tRNA(Lys) + L-lysine + ATP = L-lysyl-tRNA(Lys) + AMP + diphosphate. In Methylobacillus flagellatus (strain ATCC 51484 / DSM 6875 / VKM B-1610 / KT), this protein is Lysine--tRNA ligase.